Consider the following 335-residue polypeptide: Serine/threonine-protein kinase crk1 (335 aa).

In terms of domain architecture, Protein kinase spans 11–292 (YVKERKVGEG…AQQALEHHYF (282 aa)). ATP is bound by residues 17–25 (VGEGTYAVV) and K40. D133 serves as the catalytic Proton acceptor. S162 is subject to Phosphoserine. At S165 the chain carries Phosphoserine; by CAK. At S318 the chain carries Phosphoserine.

It belongs to the protein kinase superfamily. CMGC Ser/Thr protein kinase family. CDC2/CDKX subfamily. As to quaternary structure, one of the nine subunits forming the core-TFIIH basal transcription factor. Interacts with mcs2 and tfb3.

The protein localises to the cytoplasm. It localises to the nucleus. The enzyme catalyses [DNA-directed RNA polymerase] + ATP = phospho-[DNA-directed RNA polymerase] + ADP + H(+). Functionally, protein kinase essential for cell proliferation, where it is required for completion of cytokinesis. Phosphorylates the C-terminal repeat domain (CTD) of RNA polymerase II. The protein is Serine/threonine-protein kinase crk1 (crk1) of Schizosaccharomyces pombe (strain 972 / ATCC 24843) (Fission yeast).